A 385-amino-acid chain; its full sequence is A-type ATP synthase subunit C (385 aa).

This sequence belongs to the V-ATPase V0D/AC39 subunit family. Has multiple subunits with at least A(3), B(3), C, D, E, F, H, I and proteolipid K(x).

It is found in the cell membrane. Its function is as follows. Component of the A-type ATP synthase that produces ATP from ADP in the presence of a proton gradient across the membrane. This chain is A-type ATP synthase subunit C, found in Methanothermobacter thermautotrophicus (strain ATCC 29096 / DSM 1053 / JCM 10044 / NBRC 100330 / Delta H) (Methanobacterium thermoautotrophicum).